The primary structure comprises 910 residues: Importin subunit beta-2 (910 aa).

HEAT repeat units follow at residues 12 to 39, 44 to 82, 93 to 126, 132 to 169, 177 to 207, 220 to 247, 259 to 286, 302 to 406, 414 to 442, 454 to 481, 499 to 532, 540 to 573, 581 to 619, 627 to 677, 690 to 721, 729 to 764, 772 to 807, 815 to 848, and 857 to 888; these read VLVE…NLLE, IPDL…VSSL, YTKS…RWGI, VLPQ…LDRD, DFMI…QFVL, FLET…VYLL, GSIV…FWLA, DKIV…LSSF, IILP…GAIA, PELY…TLGR, FVPL…EEQA, LEPI…ADYV, RYIE…VALR, AETY…ALGS, LGQI…MYCF, DALL…LQLG, KPLL…VYNP, ELFY…LACN, and PMFV…VELF. One can recognise an Importin N-terminal domain in the interval 34–122; the sequence is ALNLLEKAKD…SGNVITTIIS (89 aa). Residues 333 to 381 form a disordered region; the sequence is DREEDIRPQHAKGKSRITLNTQGPITQQGSSNADADELEDEDEDDDEFD. Residues 349–364 are compositionally biased toward polar residues; sequence ITLNTQGPITQQGSSN. Residues 366 to 381 show a composition bias toward acidic residues; that stretch reads DADELEDEDEDDDEFD.

This sequence belongs to the importin beta family. Importin beta-2 subfamily. As to quaternary structure, interacts with Ran; interacts specifically with the GTP-bound form of Ran (GTP-Ran), protecting it from GTP hydrolysis and nucleotide exchange. Interacts with nucleoporins.

It localises to the cytoplasm. Its subcellular location is the nucleus envelope. Functions in nuclear protein import as nuclear transport receptor. Serves as receptor for arginine/glycine-rich nuclear localization signals (rg-NLS) and PY-NLS in cargo substrates. Its predominant cargo substrate seems to be mRNA-binding proteins. Mediates docking of the importin/substrate complex to the nuclear pore complex (NPC) through binding to repeat-containing nucleoporins. The complex is subsequently translocated through the pore by an energy requiring, Ran-dependent mechanism. At the nucleoplasmic side of the NPC, GTP-Ran binding leads to release of the cargo. The importin is re-exported from the nucleus to the cytoplasm where GTP hydrolysis releases Ran from importin. The directionality of nuclear import is thought to be conferred by an asymmetric distribution of the GTP- and GDP-bound forms of Ran between the cytoplasm and nucleus. The polypeptide is Importin subunit beta-2 (Schizosaccharomyces pombe (strain 972 / ATCC 24843) (Fission yeast)).